Consider the following 142-residue polypeptide: ATP synthase subunit b' (142 aa).

The chain crosses the membrane as a helical span at residues Thr-7–Phe-27.

This sequence belongs to the ATPase B chain family. F-type ATPases have 2 components, F(1) - the catalytic core - and F(0) - the membrane proton channel. F(1) has five subunits: alpha(3), beta(3), gamma(1), delta(1), epsilon(1). F(0) has four main subunits: a(1), b(1), b'(1) and c(10-14). The alpha and beta chains form an alternating ring which encloses part of the gamma chain. F(1) is attached to F(0) by a central stalk formed by the gamma and epsilon chains, while a peripheral stalk is formed by the delta, b and b' chains.

Its subcellular location is the cellular thylakoid membrane. Its function is as follows. F(1)F(0) ATP synthase produces ATP from ADP in the presence of a proton or sodium gradient. F-type ATPases consist of two structural domains, F(1) containing the extramembraneous catalytic core and F(0) containing the membrane proton channel, linked together by a central stalk and a peripheral stalk. During catalysis, ATP synthesis in the catalytic domain of F(1) is coupled via a rotary mechanism of the central stalk subunits to proton translocation. Functionally, component of the F(0) channel, it forms part of the peripheral stalk, linking F(1) to F(0). The b'-subunit is a diverged and duplicated form of b found in plants and photosynthetic bacteria. The polypeptide is ATP synthase subunit b' (Acaryochloris marina (strain MBIC 11017)).